The primary structure comprises 303 residues: MEDLLHSIEQKVKPLIGLGKVADYIPALANVDPNQFGIAIYSNNGELYHAGQAYTDFSIQSISKVFSLTLAIKHYGEDMWKRVGREPSGNPFNSLVQLEYEAGVPRNPFINAGALVISDMNQSRFASPHYAMREFIRRLADNPHLNSDQIVANSEYEFRARNASMAYLMKAFGNFENDVEDVLHSYFDNCAMRMNCVDLAKSFSFLANKGYSQLSGEQILSARETTQVNGLLATSGLYDEAGNFAYRVGLPGKSGVGGGIIAIVPNRFSVCVWSPELNKSGNSLAGMAALEALSESIGWSVFG.

Residues serine 61, asparagine 111, glutamate 155, asparagine 162, tyrosine 186, tyrosine 238, and valine 256 each contribute to the substrate site.

This sequence belongs to the glutaminase family. Homotetramer.

It carries out the reaction L-glutamine + H2O = L-glutamate + NH4(+). The sequence is that of Glutaminase from Marinomonas sp. (strain MWYL1).